The sequence spans 595 residues: DNA mismatch repair protein MutL (595 aa).

Belongs to the DNA mismatch repair MutL/HexB family.

In terms of biological role, this protein is involved in the repair of mismatches in DNA. It is required for dam-dependent methyl-directed DNA mismatch repair. May act as a 'molecular matchmaker', a protein that promotes the formation of a stable complex between two or more DNA-binding proteins in an ATP-dependent manner without itself being part of a final effector complex. This Rhodopseudomonas palustris (strain TIE-1) protein is DNA mismatch repair protein MutL.